The sequence spans 124 residues: Large ribosomal subunit protein bL12 (124 aa).

The protein belongs to the bacterial ribosomal protein bL12 family. In terms of assembly, homodimer. Part of the ribosomal stalk of the 50S ribosomal subunit. Forms a multimeric L10(L12)X complex, where L10 forms an elongated spine to which 2 to 4 L12 dimers bind in a sequential fashion. Binds GTP-bound translation factors.

In terms of biological role, forms part of the ribosomal stalk which helps the ribosome interact with GTP-bound translation factors. Is thus essential for accurate translation. The chain is Large ribosomal subunit protein bL12 from Akkermansia muciniphila (strain ATCC BAA-835 / DSM 22959 / JCM 33894 / BCRC 81048 / CCUG 64013 / CIP 107961 / Muc).